The primary structure comprises 340 residues: Galactoside alpha-(1,2)-fucosyltransferase 2 (340 aa).

Residues 1–7 lie on the Cytoplasmic side of the membrane; that stretch reads MLSMQAS. A helical; Signal-anchor for type II membrane protein membrane pass occupies residues 8–28; that stretch reads FFFPTGPFILFVFTASTIFHL. Residues 29–340 are Lumenal-facing; sequence QQRMVKIQPT…EADLSPLLKH (312 aa). N185, N251, N279, and N305 each carry an N-linked (GlcNAc...) asparagine glycan.

The protein localises to the golgi apparatus. Its subcellular location is the golgi stack membrane. The enzyme catalyses a beta-D-galactosyl-(1-&gt;3)-N-acetyl-beta-D-glucosaminyl derivative + GDP-beta-L-fucose = an alpha-L-Fuc-(1-&gt;2)-beta-D-Gal-(1-&gt;3)-beta-D-GlcNAc derivative + GDP + H(+). It carries out the reaction a beta-D-galactosyl-(1-&gt;4)-N-acetyl-beta-D-glucosaminyl derivative + GDP-beta-L-fucose = an alpha-L-Fuc-(1-&gt;2)-beta-D-Gal-(1-&gt;4)-beta-D-GlcNAc derivative + GDP + H(+). It catalyses the reaction a neolactoside nLc4Cer + GDP-beta-L-fucose = a neolactoside IV(2)-alpha-Fuc-nLc4Cer + GDP + H(+). The catalysed reaction is a neolactoside nLc4Cer(d18:1(4E)) + GDP-beta-L-fucose = a neolactoside IV(2)-alpha-Fuc-nLc4Cer(d18:1(4E)) + GDP + H(+). The enzyme catalyses a ganglioside GM1 + GDP-beta-L-fucose = a ganglioside Fuc-GM1 + GDP + H(+). It carries out the reaction a ganglioside GA1 + GDP-beta-L-fucose = a ganglioside Fuc-GA1 + GDP + H(+). It catalyses the reaction Lc4Cer + GDP-beta-L-fucose = alpha-L-fucosyl-(1-&gt;2)-beta-D-galactosyl-(1-&gt;3)-N-acetyl-beta-D-glucosaminyl-(1-&gt;3)-beta-D-galactosyl-(1-&gt;4)-beta-D-glucosyl-(1&lt;-&gt;1')-ceramide + GDP + H(+). The catalysed reaction is a beta-D-Gal-(1-&gt;3)-beta-D-GlcNAc-(1-&gt;3)-beta-D-Gal-(1-&gt;4)-beta-D-Glc-(1&lt;-&gt;1')-Cer(d18:1(4E)) + GDP-beta-L-fucose = alpha-L-fucosyl-(1-&gt;2)- beta-D-galactosyl-(1-&gt;3)-N-acetyl-beta-D-glucosaminyl-(1-&gt;3)-beta-D-galactosyl-(1-&gt;4)-beta-D-glucosyl-(1&lt;-&gt;1')-N-acylsphing-4-enine + GDP + H(+). The enzyme catalyses a ganglioside GD1b + GDP-beta-L-fucose = a ganglioside Fuc-GD1b + GDP + H(+). It carries out the reaction a ganglioside GM1 (d18:1(4E)) + GDP-beta-L-fucose = a ganglioside Fuc-GM1 (d18:1(4E)) + GDP + H(+). It catalyses the reaction a globoside GalGb4Cer (d18:1(4E)) + GDP-beta-L-fucose = a globoside Globo-H (d18:1(4E)) + GDP + H(+). The catalysed reaction is a lactoside III(4)-a-Fuc-Lc4Cer + GDP-beta-L-fucose = a lactoside IV(2),III(4)-a-[Fuc]2-Lc4Cer + GDP + H(+). The enzyme catalyses beta-D-galactosyl-(1-&gt;3)-N-acetyl-D-galactosamine + GDP-beta-L-fucose = alpha-L-fucosyl-(1-&gt;2)-beta-D-galactosyl-(1-&gt;3)-N-acetyl-D-galactosamine + GDP + H(+). The protein operates within protein modification; protein glycosylation. Catalyzes the transfer of L-fucose, from a guanosine diphosphate-beta-L-fucose, to the terminal galactose on both O- and N-linked glycans chains of cell surface glycoproteins and glycolipids and the resulting epitope regulates several processes such as cell-cell interaction including host-microbe interaction, cell surface expression and cell proliferation. Preferentially fucosylates gangliosides GA1 and GM1 in the antrum, cecum and colon and in the female reproductive organs. Fucosylated host glycoproteins or glycolipids mediate interaction with intestinal microbiota influencing its composition. Creates a soluble precursor oligosaccharide FuC-alpha ((1,2)Galbeta-) called the H antigen which is an essential substrate for the final step in the soluble ABO blood group antigen synthesis pathway. This chain is Galactoside alpha-(1,2)-fucosyltransferase 2, found in Sus scrofa (Pig).